We begin with the raw amino-acid sequence, 504 residues long: Protein anon-37Cs (504 aa).

In terms of tissue distribution, low levels seen in adult heads, thorax, abdomen and ovaries, high levels in testes.

The protein localises to the cytoplasm. Functionally, has a non-vital function. The polypeptide is Protein anon-37Cs (anon-37Cs) (Drosophila melanogaster (Fruit fly)).